The primary structure comprises 252 residues: 2-succinyl-6-hydroxy-2,4-cyclohexadiene-1-carboxylate synthase (252 aa).

Belongs to the AB hydrolase superfamily. MenH family. As to quaternary structure, monomer.

It carries out the reaction 5-enolpyruvoyl-6-hydroxy-2-succinyl-cyclohex-3-ene-1-carboxylate = (1R,6R)-6-hydroxy-2-succinyl-cyclohexa-2,4-diene-1-carboxylate + pyruvate. Its pathway is quinol/quinone metabolism; 1,4-dihydroxy-2-naphthoate biosynthesis; 1,4-dihydroxy-2-naphthoate from chorismate: step 3/7. The protein operates within quinol/quinone metabolism; menaquinone biosynthesis. In terms of biological role, catalyzes a proton abstraction reaction that results in 2,5-elimination of pyruvate from 2-succinyl-5-enolpyruvyl-6-hydroxy-3-cyclohexene-1-carboxylate (SEPHCHC) and the formation of 2-succinyl-6-hydroxy-2,4-cyclohexadiene-1-carboxylate (SHCHC). This chain is 2-succinyl-6-hydroxy-2,4-cyclohexadiene-1-carboxylate synthase, found in Salmonella paratyphi B (strain ATCC BAA-1250 / SPB7).